Here is a 733-residue protein sequence, read N- to C-terminus: Hypermethylated in cancer 1 protein (733 aa).

In terms of domain architecture, BTB spans 47–110 (CDVIIVVQNA…IYTGRLADGA (64 aa)). The tract at residues 154–315 (KYCHLRGGGG…PFRGGSGSPG (162 aa)) is mediates HDAC-dependent transcriptional repression. Arginine 159 carries the post-translational modification Omega-N-methylarginine. Residues 189-209 (YPSPVGPPPPPAAEPPSGPEA) form a disordered region. The span at 192-206 (PVGPPPPPAAEPPSG) shows a compositional bias: pro residues. The residue at position 237 (serine 237) is a Phosphoserine. An interaction with CTBP1 region spans residues 241-247 (GLDLSKK). The tract at residues 241–421 (GLDLSKKSPP…PGGHLEGYPC (181 aa)) is disordered. A Phosphoserine modification is found at serine 248. Residues 284–293 (LALPSLPPLP) show a composition bias toward pro residues. Residue lysine 333 is modified to N6-acetyllysine; alternate. Lysine 333 participates in a covalent cross-link: Glycyl lysine isopeptide (Lys-Gly) (interchain with G-Cter in SUMO); alternate. A compositionally biased stretch (basic and acidic residues) spans 344-361 (ELGRERGSPSERCEERGG). Residue serine 366 is modified to Phosphoserine. A compositionally biased stretch (pro residues) spans 368 to 380 (GGPPLGLAPPPRY). 5 consecutive C2H2-type zinc fingers follow at residues 439–459 (CIPC…VEAH), 509–529 (CASC…EKTH), 537–557 (CTIC…MRSH), 565–585 (CDAC…MRIH), and 593–613 (CQVC…MKMH). Serine 704 is modified (phosphoserine).

Belongs to the krueppel C2H2-type zinc-finger protein family. Hic subfamily. As to quaternary structure, self-associates. Interacts with HIC2. Interacts with CTBP1 and CTBP2. Interacts with TCF7L2 and ARID1A. Interacts with MTA1 and MBD3; indicative for an association with the NuRD complex. Interacts with SIRT1. In terms of processing, acetylated on several residues, including Lys-333. Lys-333 is deacetylated by SIRT1. Sumoylated on Lys-333 by a PIAS family member, which enhances interaction with MTA1, positively regulates transcriptional repression activity and is enhanced by HDAC4. Ubiquitously expressed with highest levels found in lung, colon, prostate, thymus, testis and ovary. Expression is absent or decreased in many tumor cells.

It is found in the nucleus. Transcriptional repressor. Recognizes and binds to the consensus sequence '5-[CG]NG[CG]GGGCA[CA]CC-3'. May act as a tumor suppressor. Involved in development of head, face, limbs and ventral body wall. Involved in down-regulation of SIRT1 and thereby is involved in regulation of p53/TP53-dependent apoptotic DNA-damage responses. The specific target gene promoter association seems to be depend on corepressors, such as CTBP1 or CTBP2 and MTA1. In cooperation with MTA1 (indicative for an association with the NuRD complex) represses transcription from CCND1/cyclin-D1 and CDKN1C/p57Kip2 specifically in quiescent cells. Involved in regulation of the Wnt signaling pathway probably by association with TCF7L2 and preventing TCF7L2 and CTNNB1 association with promoters of TCF-responsive genes. Seems to repress transcription from E2F1 and ATOH1 which involves ARID1A, indicative for the participation of a distinct SWI/SNF-type chromatin-remodeling complex. Probably represses transcription of ACKR3, FGFBP1 and EFNA1. The chain is Hypermethylated in cancer 1 protein (HIC1) from Homo sapiens (Human).